The sequence spans 409 residues: Tryptophan synthase beta chain (409 aa).

The residue at position 98 (K98) is an N6-(pyridoxal phosphate)lysine.

The protein belongs to the TrpB family. Tetramer of two alpha and two beta chains. Requires pyridoxal 5'-phosphate as cofactor.

The catalysed reaction is (1S,2R)-1-C-(indol-3-yl)glycerol 3-phosphate + L-serine = D-glyceraldehyde 3-phosphate + L-tryptophan + H2O. It participates in amino-acid biosynthesis; L-tryptophan biosynthesis; L-tryptophan from chorismate: step 5/5. The beta subunit is responsible for the synthesis of L-tryptophan from indole and L-serine. In Cereibacter sphaeroides (strain ATCC 17023 / DSM 158 / JCM 6121 / CCUG 31486 / LMG 2827 / NBRC 12203 / NCIMB 8253 / ATH 2.4.1.) (Rhodobacter sphaeroides), this protein is Tryptophan synthase beta chain (trpB).